The chain runs to 121 residues: ATP synthase epsilon chain (121 aa).

It belongs to the ATPase epsilon chain family. F-type ATPases have 2 components, CF(1) - the catalytic core - and CF(0) - the membrane proton channel. CF(1) has five subunits: alpha(3), beta(3), gamma(1), delta(1), epsilon(1). CF(0) has three main subunits: a, b and c.

The protein localises to the cell membrane. Its function is as follows. Produces ATP from ADP in the presence of a proton gradient across the membrane. The polypeptide is ATP synthase epsilon chain (Mycobacterium marinum (strain ATCC BAA-535 / M)).